Consider the following 201-residue polypeptide: Superoxide dismutase [Mn] (201 aa).

Residues His27, His81, Asp163, and His167 each coordinate Mn(2+).

The protein belongs to the iron/manganese superoxide dismutase family. As to quaternary structure, homodimer. It depends on Mn(2+) as a cofactor.

Its subcellular location is the secreted. It catalyses the reaction 2 superoxide + 2 H(+) = H2O2 + O2. Destroys superoxide anion radicals which are normally produced within the cells and which are toxic to biological systems. The chain is Superoxide dismutase [Mn] (sodA) from Streptococcus pyogenes serotype M6 (strain ATCC BAA-946 / MGAS10394).